Reading from the N-terminus, the 267-residue chain is Small ribosomal subunit protein uS3 (267 aa).

Residues 38–106 form the KH type-2 domain; it reads IRKLLATGME…QVQLNILEVK (69 aa). The tract at residues 215 to 267 is disordered; it reads TAASAPAGDRDRPRRERPSRPRRSGSTGTTATSTEAGRAATAVVEAPAENQEG. Basic and acidic residues predominate over residues 222–233; the sequence is GDRDRPRRERPS. Low complexity predominate over residues 238 to 256; the sequence is SGSTGTTATSTEAGRAATA.

It belongs to the universal ribosomal protein uS3 family. Part of the 30S ribosomal subunit. Forms a tight complex with proteins S10 and S14.

Its function is as follows. Binds the lower part of the 30S subunit head. Binds mRNA in the 70S ribosome, positioning it for translation. This Nocardia farcinica (strain IFM 10152) protein is Small ribosomal subunit protein uS3.